The sequence spans 280 residues: Pyridoxal 5'-phosphate synthase subunit PdxS (280 aa).

D-ribose 5-phosphate is bound at residue D12. K69 serves as the catalytic Schiff-base intermediate with D-ribose 5-phosphate. A D-ribose 5-phosphate-binding site is contributed by G141. Position 153 (R153) interacts with D-glyceraldehyde 3-phosphate. Residues G202 and 223-224 (GS) each bind D-ribose 5-phosphate.

The protein belongs to the PdxS/SNZ family. As to quaternary structure, in the presence of PdxT, forms a dodecamer of heterodimers.

It carries out the reaction aldehydo-D-ribose 5-phosphate + D-glyceraldehyde 3-phosphate + L-glutamine = pyridoxal 5'-phosphate + L-glutamate + phosphate + 3 H2O + H(+). The protein operates within cofactor biosynthesis; pyridoxal 5'-phosphate biosynthesis. Its function is as follows. Catalyzes the formation of pyridoxal 5'-phosphate from ribose 5-phosphate (RBP), glyceraldehyde 3-phosphate (G3P) and ammonia. The ammonia is provided by the PdxT subunit. Can also use ribulose 5-phosphate and dihydroxyacetone phosphate as substrates, resulting from enzyme-catalyzed isomerization of RBP and G3P, respectively. The chain is Pyridoxal 5'-phosphate synthase subunit PdxS from Fusobacterium nucleatum subsp. nucleatum (strain ATCC 25586 / DSM 15643 / BCRC 10681 / CIP 101130 / JCM 8532 / KCTC 2640 / LMG 13131 / VPI 4355).